Here is a 435-residue protein sequence, read N- to C-terminus: Glutamyl-tRNA reductase (435 aa).

Substrate-binding positions include 50 to 53 (TCNR), Ser-110, 115 to 117 (ETQ), and Gln-121. Cys-51 acts as the Nucleophile in catalysis. An NADP(+)-binding site is contributed by 189–194 (GAGEMS).

This sequence belongs to the glutamyl-tRNA reductase family. Homodimer.

It carries out the reaction (S)-4-amino-5-oxopentanoate + tRNA(Glu) + NADP(+) = L-glutamyl-tRNA(Glu) + NADPH + H(+). It participates in porphyrin-containing compound metabolism; protoporphyrin-IX biosynthesis; 5-aminolevulinate from L-glutamyl-tRNA(Glu): step 1/2. Its function is as follows. Catalyzes the NADPH-dependent reduction of glutamyl-tRNA(Glu) to glutamate 1-semialdehyde (GSA). The chain is Glutamyl-tRNA reductase from Campylobacter lari (strain RM2100 / D67 / ATCC BAA-1060).